Reading from the N-terminus, the 171-residue chain is Terminase, small subunit (171 aa).

It belongs to the P23virus small terminase family. In terms of assembly, homononamer; forms a ring-like structure through which genomic DNA is translocated into the capsid. Heterodimer with the terminase large subunit; the active complex is probably heterooligomeric.

Its function is as follows. The terminase small subunit binds to the packaging initiation site and regulates the ATPase activity of the terminase large subunit. The terminase lies at a unique vertex of the procapsid and is composed of two subunits, a small terminase subunit involved in viral DNA recognition (packaging sequence), and a large terminase subunit. Both terminase subunits heterooligomerize and are docked on the portal protein to form the packaging machine. The sequence is that of Terminase, small subunit from Thermus virus P23-45 (Thermus thermophilus phage P23-45).